The chain runs to 69 residues: Copper chaperone CopZ (69 aa).

Residues Met-1–Glu-67 enclose the HMA domain. Cu cation is bound by residues Cys-12 and Cys-15.

As to quaternary structure, monomer in the absence of copper. Homodimer or homooligomer in the presence of copper ions. Interacts with the copper ATPase CopA. Interacts with CopY via a charge-based interaction.

It is found in the cytoplasm. Acts as a copper chaperone by delivering 2 Cu(+) ions to CopY Zn(2+)-bound form. This transfer results in displacement of zinc and dissociation of CopY from the promoter, allowing transcription of the copYZAB operon. In Enterococcus hirae (strain ATCC 9790 / DSM 20160 / JCM 8729 / LMG 6399 / NBRC 3181 / NCIMB 6459 / NCDO 1258 / NCTC 12367 / WDCM 00089 / R), this protein is Copper chaperone CopZ (copZ).